The primary structure comprises 159 residues: Ribonuclease H (159 aa).

An RNase H type-1 domain is found at 2–144; that stretch reads SQDPVIIHTD…ADELATRGLQ (143 aa). Mg(2+)-binding residues include aspartate 11, glutamate 50, aspartate 72, and aspartate 136.

Belongs to the RNase H family. Monomer. Mg(2+) serves as cofactor.

Its subcellular location is the cytoplasm. The enzyme catalyses Endonucleolytic cleavage to 5'-phosphomonoester.. Functionally, endonuclease that specifically degrades the RNA of RNA-DNA hybrids. This Mycolicibacterium smegmatis (strain ATCC 700084 / mc(2)155) (Mycobacterium smegmatis) protein is Ribonuclease H.